A 469-amino-acid chain; its full sequence is Aspartyl/glutamyl-tRNA(Asn/Gln) amidotransferase subunit B (469 aa).

This sequence belongs to the GatB/GatE family. GatB subfamily. In terms of assembly, heterotrimer of A, B and C subunits.

The enzyme catalyses L-glutamyl-tRNA(Gln) + L-glutamine + ATP + H2O = L-glutaminyl-tRNA(Gln) + L-glutamate + ADP + phosphate + H(+). It catalyses the reaction L-aspartyl-tRNA(Asn) + L-glutamine + ATP + H2O = L-asparaginyl-tRNA(Asn) + L-glutamate + ADP + phosphate + 2 H(+). Allows the formation of correctly charged Asn-tRNA(Asn) or Gln-tRNA(Gln) through the transamidation of misacylated Asp-tRNA(Asn) or Glu-tRNA(Gln) in organisms which lack either or both of asparaginyl-tRNA or glutaminyl-tRNA synthetases. The reaction takes place in the presence of glutamine and ATP through an activated phospho-Asp-tRNA(Asn) or phospho-Glu-tRNA(Gln). The chain is Aspartyl/glutamyl-tRNA(Asn/Gln) amidotransferase subunit B from Thermus thermophilus (strain ATCC BAA-163 / DSM 7039 / HB27).